A 938-amino-acid chain; its full sequence is Isoleucine--tRNA ligase (938 aa).

The short motif at 58–68 is the 'HIGH' region element; the sequence is PYANGSIHIGH. At Lys183 the chain carries N6-acetyllysine. Glu561 provides a ligand contact to L-isoleucyl-5'-AMP. The 'KMSKS' region motif lies at 602–606; the sequence is KMSKS. ATP is bound at residue Lys605. Residues Cys901, Cys904, Cys921, and Cys924 each contribute to the Zn(2+) site.

It belongs to the class-I aminoacyl-tRNA synthetase family. IleS type 1 subfamily. In terms of assembly, monomer. Zn(2+) serves as cofactor.

The protein resides in the cytoplasm. The enzyme catalyses tRNA(Ile) + L-isoleucine + ATP = L-isoleucyl-tRNA(Ile) + AMP + diphosphate. In terms of biological role, catalyzes the attachment of isoleucine to tRNA(Ile). As IleRS can inadvertently accommodate and process structurally similar amino acids such as valine, to avoid such errors it has two additional distinct tRNA(Ile)-dependent editing activities. One activity is designated as 'pretransfer' editing and involves the hydrolysis of activated Val-AMP. The other activity is designated 'posttransfer' editing and involves deacylation of mischarged Val-tRNA(Ile). The polypeptide is Isoleucine--tRNA ligase (Escherichia coli O9:H4 (strain HS)).